The following is a 224-amino-acid chain: Mammalian ependymin-related protein 1 (224 aa).

Residues 1-37 form the signal peptide; the sequence is MPARAPRRLVQGPRGTWLLGSLWVWVLCGLGMAGSLG. 3 disulfides stabilise this stretch: cysteine 42/cysteine 172, cysteine 88/cysteine 222, and cysteine 113/cysteine 210. N-linked (GlcNAc...) asparagine glycosylation is found at asparagine 130 and asparagine 182.

The protein belongs to the ependymin family. Homodimer. N-glycosylated; the glycan contains mannose-6-phosphate moieties. As to expression, detected in brain, small intestine and in soleus, extensor digitorum longus and white gastrocnemius (at protein level). Detected in brain and skeletal muscle, and at lower leavels in heart.

It localises to the lysosome lumen. The protein localises to the secreted. Functionally, binds anionic lipids and gangliosides at acidic pH. This Mus musculus (Mouse) protein is Mammalian ependymin-related protein 1 (Epdr1).